A 570-amino-acid polypeptide reads, in one-letter code: Peptidyl-prolyl cis-trans isomerase CYP63 (570 aa).

The region spanning 10–174 is the PPIase cyclophilin-type domain; that stretch reads FLDVSIGGDP…SPVKIIDCGE (165 aa). The segment at 180–570 is disordered; that stretch reads AHDAAEREKG…GKRGLVSYAD (391 aa). A compositionally biased stretch (basic and acidic residues) spans 203 to 219; that stretch reads VSDREAKETRKKESNEK. 2 stretches are compositionally biased toward low complexity: residues 229 to 238 and 246 to 259; these read SSDSYSSSSD and EAYSSSSYESSSSS. Residues 262–292 show a composition bias toward basic residues; the sequence is KHRKRKSTTRHKGRRGERKSKGRSGKKKARP. A compositionally biased stretch (low complexity) spans 297–309; the sequence is STNSSSDTESSSS. Positions 323 to 339 are enriched in basic and acidic residues; the sequence is VKVDNADQHANLDDSVK. Position 340 is a phosphoserine (Ser-340). Over residues 340 to 351 the composition is skewed to basic residues; it reads SRSRSPIRRRNQ. Low complexity predominate over residues 352–365; sequence NSRSKSPSRSPVRV. Composition is skewed to basic and acidic residues over residues 387-397 and 437-467; these read SPREKPTEETV and SPPRHWPDRRNFQDRNRDRYPSNRSYSERSP. Positions 468–490 are enriched in basic residues; the sequence is RGRFRSPPRRRSPPRYNRRRRST. Residues 495–505 are compositionally biased toward basic and acidic residues; it reads DGYRRRLRDGS. The span at 509–523 shows a compositional bias: basic residues; it reads SPRHRSRSQSPRKRQ. A compositionally biased stretch (low complexity) spans 546–555; that stretch reads SPAESLSPSH.

This sequence belongs to the cyclophilin-type PPIase family. In terms of assembly, interacts with SNRNP35, RNU1, SCL28, SCL30, SR30 and SR34. The binding to SR34 is phosphorylation-dependent. In terms of tissue distribution, ubiquitous.

It localises to the nucleus. It is found in the nucleoplasm. Its subcellular location is the nucleus speckle. It carries out the reaction [protein]-peptidylproline (omega=180) = [protein]-peptidylproline (omega=0). PPIases accelerate the folding of proteins. It catalyzes the cis-trans isomerization of proline imidic peptide bonds in oligopeptides. May be implicated in the folding, transport, and assembly of proteins. Probably involved in early steps of spliceosomal assembly. The chain is Peptidyl-prolyl cis-trans isomerase CYP63 (CYP63) from Arabidopsis thaliana (Mouse-ear cress).